Consider the following 124-residue polypeptide: Small ribosomal subunit protein uS12 (124 aa).

D89 carries the post-translational modification 3-methylthioaspartic acid. A disordered region spans residues 103–124; that stretch reads DTAGVKDRRQSRSKYGAKSPKE.

Belongs to the universal ribosomal protein uS12 family. As to quaternary structure, part of the 30S ribosomal subunit. Contacts proteins S8 and S17. May interact with IF1 in the 30S initiation complex.

Its function is as follows. With S4 and S5 plays an important role in translational accuracy. Interacts with and stabilizes bases of the 16S rRNA that are involved in tRNA selection in the A site and with the mRNA backbone. Located at the interface of the 30S and 50S subunits, it traverses the body of the 30S subunit contacting proteins on the other side and probably holding the rRNA structure together. The combined cluster of proteins S8, S12 and S17 appears to hold together the shoulder and platform of the 30S subunit. This is Small ribosomal subunit protein uS12 from Prochlorococcus marinus (strain NATL2A).